A 187-amino-acid polypeptide reads, in one-letter code: 5-formyltetrahydrofolate cyclo-ligase (187 aa).

Residues 6-10 (RQQIR), 139-146 (GMGGGFYD), and D178 contribute to the ATP site.

It belongs to the 5-formyltetrahydrofolate cyclo-ligase family.

The enzyme catalyses (6S)-5-formyl-5,6,7,8-tetrahydrofolate + ATP = (6R)-5,10-methenyltetrahydrofolate + ADP + phosphate. Its pathway is one-carbon metabolism; tetrahydrofolate interconversion. Involved in the removal of 5-formyltetrahydrofolate. In vitro, it is a potent inhibitor of various folate-dependent enzymes in the C1 metabolism network and in vivo it might function as a folate storage. 5-formyltetrahydrofolate is also used as an antifolate rescue agent in cancer chemotherapy. Catalyzes the irreversible ATP-dependent transformation of 5-formyltetrahydrofolate (5-CHO-THF) to form 5,10-methenyltetrahydrofolate (5,10-CH=THF). The reverse reaction is catalyzed by the serine hydroxymethyltransferase GlyA (SHMT). The sequence is that of 5-formyltetrahydrofolate cyclo-ligase from Haemophilus influenzae (strain ATCC 51907 / DSM 11121 / KW20 / Rd).